We begin with the raw amino-acid sequence, 363 residues long: Fructose-bisphosphate aldolase C (363 aa).

The residue at position 5 (Tyr-5) is a Phosphotyrosine. 3 positions are modified to phosphoserine: Ser-36, Ser-39, and Ser-45. Residue Arg-56 coordinates substrate. N6-acetyllysine is present on Lys-111. Lys-147 contacts substrate. Glu-188 functions as the Proton acceptor in the catalytic mechanism. Lys-230 serves as the catalytic Schiff-base intermediate with dihydroxyacetone-P.

The protein belongs to the class I fructose-bisphosphate aldolase family. In terms of assembly, homotetramer. Interacts with ATP6V1E1. In terms of tissue distribution, expressed exclusively in Purkinje cells in bands running from anterior to posterior across most of the cerebellum. Expressed at higher levels in the brains of BSE-infected animals.

The catalysed reaction is beta-D-fructose 1,6-bisphosphate = D-glyceraldehyde 3-phosphate + dihydroxyacetone phosphate. Its pathway is carbohydrate degradation; glycolysis; D-glyceraldehyde 3-phosphate and glycerone phosphate from D-glucose: step 4/4. The polypeptide is Fructose-bisphosphate aldolase C (Aldoc) (Mus musculus (Mouse)).